The chain runs to 154 residues: 3-hydroxyacyl-[acyl-carrier-protein] dehydratase FabZ (154 aa).

The active site involves His54.

The protein belongs to the thioester dehydratase family. FabZ subfamily.

Its subcellular location is the cytoplasm. It carries out the reaction a (3R)-hydroxyacyl-[ACP] = a (2E)-enoyl-[ACP] + H2O. Its function is as follows. Involved in unsaturated fatty acids biosynthesis. Catalyzes the dehydration of short chain beta-hydroxyacyl-ACPs and long chain saturated and unsaturated beta-hydroxyacyl-ACPs. This chain is 3-hydroxyacyl-[acyl-carrier-protein] dehydratase FabZ, found in Shewanella oneidensis (strain ATCC 700550 / JCM 31522 / CIP 106686 / LMG 19005 / NCIMB 14063 / MR-1).